The chain runs to 172 residues: Small ribosomal subunit protein bS16 (172 aa).

Residues 125–172 (KKRKAKEEAEAKAAAEKAAEEAAAAEAAKAEEEAAKAEEADSAEESAE) form a disordered region. Basic and acidic residues-rich tracts occupy residues 129 to 144 (AKEE…KAAE) and 152 to 163 (AKAEEEAAKAEE).

Belongs to the bacterial ribosomal protein bS16 family.

In Corynebacterium aurimucosum (strain ATCC 700975 / DSM 44827 / CIP 107346 / CN-1) (Corynebacterium nigricans), this protein is Small ribosomal subunit protein bS16.